A 380-amino-acid polypeptide reads, in one-letter code: Cytochrome b (380 aa).

The next 4 membrane-spanning stretches (helical) occupy residues 34–54 (FGSLLPVCLIAQIATGLFLAM), 78–99 (WLLRNLHANGASFFFICIYFHI), 114–134 (WNIGVILLLLVMATAFVGYVL), and 179–199 (FFTFDFILLFIIAATSLIHLL). Heme b contacts are provided by His84 and His98. His197 provides a ligand contact to heme b. Residue His202 participates in a ubiquinone binding. 4 consecutive transmembrane segments (helical) span residues 227 to 247 (FKDLLGFIILLGALAILSTFA), 289 to 309 (LGGVLALLLSIMVLFLMPITH), 321 to 341 (TAKAFFWALIANTIILTWIGG), and 348 to 368 (FISIGQIASGLYFLIFVLIIP).

Belongs to the cytochrome b family. The cytochrome bc1 complex contains 3 respiratory subunits (MT-CYB, CYC1 and UQCRFS1), 2 core proteins (UQCRC1 and UQCRC2) and probably 6 low-molecular weight proteins. Requires heme b as cofactor.

It is found in the mitochondrion inner membrane. Component of the ubiquinol-cytochrome c reductase complex (complex III or cytochrome b-c1 complex) that is part of the mitochondrial respiratory chain. The b-c1 complex mediates electron transfer from ubiquinol to cytochrome c. Contributes to the generation of a proton gradient across the mitochondrial membrane that is then used for ATP synthesis. The protein is Cytochrome b (mt-cyb) of Glandirana rugosa (Japanese wrinkled frog).